A 79-amino-acid polypeptide reads, in one-letter code: Small ribosomal subunit protein bS18 (79 aa).

It belongs to the bacterial ribosomal protein bS18 family. Part of the 30S ribosomal subunit. Forms a tight heterodimer with protein bS6.

Binds as a heterodimer with protein bS6 to the central domain of the 16S rRNA, where it helps stabilize the platform of the 30S subunit. This is Small ribosomal subunit protein bS18 from Pseudarthrobacter chlorophenolicus (strain ATCC 700700 / DSM 12829 / CIP 107037 / JCM 12360 / KCTC 9906 / NCIMB 13794 / A6) (Arthrobacter chlorophenolicus).